The sequence spans 261 residues: GTP cyclohydrolase FolE2 (261 aa).

Belongs to the GTP cyclohydrolase IV family.

It catalyses the reaction GTP + H2O = 7,8-dihydroneopterin 3'-triphosphate + formate + H(+). It participates in cofactor biosynthesis; 7,8-dihydroneopterin triphosphate biosynthesis; 7,8-dihydroneopterin triphosphate from GTP: step 1/1. Converts GTP to 7,8-dihydroneopterin triphosphate. In Fervidobacterium nodosum (strain ATCC 35602 / DSM 5306 / Rt17-B1), this protein is GTP cyclohydrolase FolE2.